A 513-amino-acid polypeptide reads, in one-letter code: Fructose import ATP-binding protein FruK (513 aa).

2 ABC transporter domains span residues 8–244 (VVMK…IGKS) and 262–505 (PGEK…IANT). ATP is bound at residue 40 to 47 (GENGAGKS).

Belongs to the ABC transporter superfamily. In terms of assembly, the complex is composed of an ATP-binding protein (FruK), two transmembrane proteins (FruF and FruG) and a solute-binding protein (FruE).

Its subcellular location is the cell membrane. It carries out the reaction D-fructose(out) + ATP + H2O = D-fructose(in) + ADP + phosphate + H(+). Its function is as follows. Part of the high-affinity ABC transporter complex FruEKFG involved in fructose uptake. Can also transport ribose and xylose, with lower affinity. Probably responsible for energy coupling to the transport system. The protein is Fructose import ATP-binding protein FruK of Bifidobacterium longum (strain NCC 2705).